The sequence spans 415 residues: Interleukin-5 receptor subunit alpha (415 aa).

Positions 1 to 17 are cleaved as a signal peptide; sequence MVPVLLILVGALATLQA. The Extracellular portion of the chain corresponds to 18–339; sequence DLLNHKKFLL…KERKSLVEWH (322 aa). Residues 29-120 form the Fibronectin type-III 1 domain; it reads PPVNFTIKAT…VSAELKAPPG (92 aa). 2 N-linked (GlcNAc...) asparagine glycosylation sites follow: N32 and N128. Disulfide bonds link C131–C152 and C179–C193. 2 N-linked (GlcNAc...) asparagine glycosylation sites follow: N213 and N241. One can recognise a Fibronectin type-III 2 domain in the interval 238–331; sequence PPRNVTVEIE…WSQPIYVGKE (94 aa). C266 and C313 are oxidised to a cystine. A WSXWS motif motif is present at residues 319–323; sequence WGEWS. The chain crosses the membrane as a helical span at residues 340-361; the sequence is LIVLPTAACFVLLIFSLICRVC. At 362 to 415 the chain is on the cytoplasmic side; that stretch reads HLWTRLFPPVPAPKSNIKDLPVVTEYEKPSNETKIEVVHCVEEVGFEVMGNSTF. The Box 1 motif motif lies at 367-375; sequence LFPPVPAPK.

In terms of assembly, interacts with IL5. Interacts with CSF2RB. Interacts with JAK2. Interacts with SDCBP. In terms of tissue distribution, expressed on eosinophils and basophils. Also on B-cells.

The protein localises to the membrane. Cell surface receptor that plays an important role in the survival, differentiation, and chemotaxis of eosinophils. Acts by forming a heterodimeric receptor with CSF2RB subunit and subsequently binding to interleukin-5. In unstimulated conditions, interacts constitutively with JAK2. Heterodimeric receptor activation leads to JAK2 stimulation and subsequent activation of the JAK-STAT pathway. The polypeptide is Interleukin-5 receptor subunit alpha (Il5ra) (Mus musculus (Mouse)).